The sequence spans 602 residues: Basic-leucine zipper transcription factor B (602 aa).

Over residues M1–G10 the composition is skewed to polar residues. Residues M1 to R128 form a disordered region. Low complexity-rich tracts occupy residues G11–S54 and Q66–D102. Positions K58–D94 form a coiled coil. The region spanning E113–A176 is the bZIP domain. The segment at K115 to K135 is basic motif. The tract at residues I138–L145 is leucine-zipper. 2 disordered regions span residues T328–N401 and Q525–Q602. Low complexity-rich tracts occupy residues P336–T350, L358–N401, and Q525–Y592. Residues T509–F552 are a coiled coil. Residues N593–Q602 are compositionally biased toward polar residues.

It belongs to the bZIP family. In terms of assembly, binds DNA as a dimer. Heterodimerizes with dimA; in vitro. Also able to form homodimer; in vitro.

The protein localises to the nucleus. Its function is as follows. Transcriptional regulator involved in DIF-1 signaling. DIF-1 (Differentiation Inducing Factor-1) is a signal molecule involved in the differentiation of pstO (prestalk-O) cells. May be a direct activator of ecmA. The sequence is that of Basic-leucine zipper transcription factor B (dimB) from Dictyostelium discoideum (Social amoeba).